The sequence spans 265 residues: 5'-nucleotidase SurE (265 aa).

A divalent metal cation contacts are provided by Asp8, Asp9, Ser39, and Asn96.

It belongs to the SurE nucleotidase family. A divalent metal cation serves as cofactor.

Its subcellular location is the cytoplasm. The catalysed reaction is a ribonucleoside 5'-phosphate + H2O = a ribonucleoside + phosphate. Functionally, nucleotidase that shows phosphatase activity on nucleoside 5'-monophosphates. This is 5'-nucleotidase SurE from Rubrobacter xylanophilus (strain DSM 9941 / JCM 11954 / NBRC 16129 / PRD-1).